A 1434-amino-acid chain; its full sequence is MEDHMFGVQQIQPNVISVRLFKRKVGGLGFLVKERVSKPPVIISDLIRGGAAEQSGLIQAGDIILAVNGRPLVDLSYDSALEVLRGIASETHVVLILRGPEGFTTHLETTFTGDGTPKTIRVTQPLGPPTKAVDLSHQPPAGKEQPLAVDGASGPGNGPQHAYDDGQEAGSLPHANGLAPRPPGQDPAKKATRVSLQGRGENNELLKEIEPVLSLLTSGSRGVKGGAPAKAEMKDMGIQVDRDLDGKSHKPLPLGVENDRVFNDLWGKGNVPVVLNNPYSEKEQPPTSGKQSPTKNGSPSKCPRFLKVKNWETEVVLTDTLHLKSTLETGCTEYICMGSIMHPSQHARRPEDVRTKGQLFPLAKEFIDQYYSSIKRFGSKAHMERLEEVNKEIDTTSTYQLKDTELIYGAKHAWRNASRCVGRIQWSKLQVFDARDCTTAHGMFNYICNHVKYATNKGNLRSAITIFPQRTDGKHDFRVWNSQLIRYAGYKQPDGSTLGDPANVQFTEICIQQGWKPPRGRFDVLPLLLQANGNDPELFQIPPELVLEVPIRHPKFEWFKDLGLKWYGLPAVSNMLLEIGGLEFSACPFSGWYMGTEIGVRDYCDNSRYNILEEVAKKMNLDMRKTSSLWKDQALVEINIAVLYSFQSDKVTIVDHHSATESFIKHMENEYRCRGGCPADWVWIVPPMSGSITPVFHQEMLNYRLTPSFEYQPDPWNTHVWKGTNGTPTKRRAIGFKKLAEAVKFSAKLMGQAMAKRVKATILYATETGKSQAYAKTLCEIFKHAFDAKVMSMEEYDIVHLEHETLVLVVTSTFGNGDPPENGEKFGCALMEMRHPNSVQEERKSYKVRFNSVSSYSDSQKSSGDGPDLRDNFESAGPLANVRFSVFGLGSRAYPHFCAFGHAVDTLLEELGGERILKMREGDELCGQEEAFRTWAKKVFKAACDVFCVGDDVNIEKANNSLISNDRSWKRNKFRLTFVAEAPELTQGLSNVHKKRVSAARLLSRQNLQSPKSSRSTIFVRLHTNGSQELQYQPGDHLGVFPGNHEDLVNALIERLEDAPPVNQMVKVELLEERNTALGVISNWTDELRLPPCTIFQAFKYYLDITTPPTPLQLQQFASLATSEKEKQRLLVLSKGLQEYEEWKWGKNPTIVEVLEEFPSIQMPATLLLTQLSLLQPRYYSISSSPDMYPDEVHLTVAIVSYRTRDGEGPIHHGVCSSWLNRIQADELVPCFVRGAPSFHLPRNPQVPCILVGPGTGIAPFRSFWQQRQFDIQHKGMNPCPMVLVFGCRQSKIDHIYREETLQAKNKGVFRELYTAYSREPDKPKKYVQDILQEQLAESVYRALKEQGGHIYVCGDVTMAADVLKAIQRIMTQQGKLSAEDAGVFISRMRDDNRYHEDIFGVTLRTYEVTNRLRSESIAFIEESKKDTDEVFSS.

Residues 1–205 form an interaction with NOSIP region; the sequence is MEDHMFGVQQ…LQGRGENNEL (205 aa). Residues 17-99 form the PDZ domain; sequence SVRLFKRKVG…ETHVVLILRG (83 aa). Disordered stretches follow at residues 112-192 and 276-302; these read TGDG…KKAT and NNPYSEKEQPPTSGKQSPTKNGSPSKC. The tract at residues 163 to 245 is interaction with DYNLL1/PIN; sequence YDDGQEAGSL…MGIQVDRDLD (83 aa). Residues 285-299 show a composition bias toward polar residues; that stretch reads PPTSGKQSPTKNGSP. S339 is a binding site for (6R)-L-erythro-5,6,7,8-tetrahydrobiopterin. Heme b is bound at residue C420. L-arginine is bound by residues Q483, W592, Y593, and E597. The (6R)-L-erythro-5,6,7,8-tetrahydrobiopterin site is built by V682, W683, and F696. Y711 lines the heme b pocket. The calmodulin-binding stretch occupies residues 730-750; it reads KRRAIGFKKLAEAVKFSAKLM. In terms of domain architecture, Flavodoxin-like spans 760–940; sequence ATILYATETG…AFRTWAKKVF (181 aa). FMN-binding residues include T766, E767, T768, K770, S771, S812, T813, and G817. Phosphoserine is present on residues S852, S862, and S863. Positions 891, 896, 898, 924, and 928 each coordinate FMN. The FAD-binding FR-type domain maps to 995 to 1242; it reads KRVSAARLLS…VRGAPSFHLP (248 aa). R1015 contributes to the NADP(+) binding site. FAD-binding residues include H1037, R1178, Y1179, Y1180, S1181, T1196, and A1198. Residue S1201 coordinates NADP(+). FAD contacts are provided by Y1202, V1215, C1216, and S1217. 10 residues coordinate NADP(+): T1256, R1289, S1318, R1319, K1325, Y1327, Q1329, D1362, T1403, and R1405.

This sequence belongs to the NOS family. As to quaternary structure, homodimer. Interacts with DLG4; the interaction possibly being prevented by the association between NOS1 and CAPON. Forms a ternary complex with CAPON and RASD1. Forms a ternary complex with CAPON and SYN1. Interacts with ZDHHC23. Interacts with NOSIP; which may impair its synaptic location. Interacts with HTR4. Interacts with SLC6A4. Interacts with VAC14. Interacts (via N-terminal domain) with DLG4 (via N-terminal tandem pair of PDZ domains). Interacts with SLC6A4. Forms a complex with ASL, ASS1 and SLC7A1; the complex regulates cell-autonomous L-arginine synthesis and citrulline recycling while channeling extracellular L-arginine to nitric oxide synthesis pathway. Interacts with DMD; localizes NOS1 to sarcolemma in muscle cells. Interacts with DYNLL1; inhibits the nitric oxide synthase activity. Heme b is required as a cofactor. The cofactor is FAD. It depends on FMN as a cofactor. Requires (6R)-L-erythro-5,6,7,8-tetrahydrobiopterin as cofactor. Post-translationally, ubiquitinated; mediated by STUB1/CHIP in the presence of Hsp70 and Hsp40 (in vitro). In terms of tissue distribution, isoform 1 is ubiquitously expressed: detected in skeletal muscle and brain, also in testis, lung and kidney, and at low levels in heart, adrenal gland and retina. Not detected in the platelets. Isoform 3 is expressed only in testis. Isoform 4 is detected in testis, skeletal muscle, lung, and kidney, at low levels in the brain, but not in the heart and adrenal gland.

It is found in the cell membrane. Its subcellular location is the sarcolemma. It localises to the cell projection. The protein resides in the dendritic spine. The enzyme catalyses 2 L-arginine + 3 NADPH + 4 O2 + H(+) = 2 L-citrulline + 2 nitric oxide + 3 NADP(+) + 4 H2O. Its activity is regulated as follows. Stimulated by calcium/calmodulin. Inhibited by DYNLL1 that prevents the dimerization of the protein. Inhibited by NOSIP. Produces nitric oxide (NO) which is a messenger molecule with diverse functions throughout the body. In the brain and peripheral nervous system, NO displays many properties of a neurotransmitter. Probably has nitrosylase activity and mediates cysteine S-nitrosylation of cytoplasmic target proteins such SRR. This is Nitric oxide synthase 1 from Homo sapiens (Human).